A 465-amino-acid polypeptide reads, in one-letter code: Hexokinase-4 (465 aa).

Positions 10-454 constitute a Hexokinase domain; the sequence is AAKKEKVEQI…SGRGAALVSA (445 aa). A hexokinase small subdomain region spans residues 67–203; sequence EGSEVGDFLS…DFEMDVVAMV (137 aa). 78–83 provides a ligand contact to ATP; sequence DLGGTN. Substrate is bound by residues 151-152, 168-169, and 204-205; these read SF, TK, and ND. The tract at residues 204–443 is hexokinase large subdomain; the sequence is NDTVATMISC…CEITFIESEE (240 aa). T228 is a binding site for ATP. Substrate contacts are provided by N231, E256, and E290. Residues 295–296, 332–336, and 411–415 each bind ATP; these read GK, TRFVS, and SVYKL.

The protein belongs to the hexokinase family. As to quaternary structure, monomer. Interacts with MIDN; the interaction occurs preferentially at low glucose levels and results in inhibition of hexokinase activity. Interacts with GCKR; leading to sequestration in the nucleus.

The protein resides in the cytoplasm. The protein localises to the nucleus. Its subcellular location is the mitochondrion. The enzyme catalyses a D-hexose + ATP = a D-hexose 6-phosphate + ADP + H(+). The catalysed reaction is D-fructose + ATP = D-fructose 6-phosphate + ADP + H(+). It carries out the reaction D-glucose + ATP = D-glucose 6-phosphate + ADP + H(+). It catalyses the reaction D-mannose + ATP = D-mannose 6-phosphate + ADP + H(+). Its pathway is carbohydrate metabolism; hexose metabolism. The protein operates within carbohydrate degradation; glycolysis; D-glyceraldehyde 3-phosphate and glycerone phosphate from D-glucose: step 1/4. Its activity is regulated as follows. Subject to allosteric regulation. Low glucose and high fructose-6-phosphate triggers association with the inhibitor GCKR followed by sequestration in the nucleus. Functionally, catalyzes the phosphorylation of hexose, such as D-glucose, D-fructose and D-mannose, to hexose 6-phosphate (D-glucose 6-phosphate, D-fructose 6-phosphate and D-mannose 6-phosphate, respectively). Compared to other hexokinases, has a weak affinity for D-glucose, and is effective only when glucose is abundant. Mainly expressed in pancreatic beta cells and the liver and constitutes a rate-limiting step in glucose metabolism in these tissues. Since insulin secretion parallels glucose metabolism and the low glucose affinity of GCK ensures that it can change its enzymatic activity within the physiological range of glucose concentrations, GCK acts as a glucose sensor in the pancreatic beta cell. In pancreas, plays an important role in modulating insulin secretion. In liver, helps to facilitate the uptake and conversion of glucose by acting as an insulin-sensitive determinant of hepatic glucose usage. Required to provide D-glucose 6-phosphate for the synthesis of glycogen. Mediates the initial step of glycolysis by catalyzing phosphorylation of D-glucose to D-glucose 6-phosphate. The sequence is that of Hexokinase-4 from Homo sapiens (Human).